Here is a 158-residue protein sequence, read N- to C-terminus: Transcription elongation factor GreA (158 aa).

The stretch at 49-73 (QAAREQQGFIEGRIKEIEAKLANAQ) forms a coiled coil.

The protein belongs to the GreA/GreB family.

Its function is as follows. Necessary for efficient RNA polymerase transcription elongation past template-encoded arresting sites. The arresting sites in DNA have the property of trapping a certain fraction of elongating RNA polymerases that pass through, resulting in locked ternary complexes. Cleavage of the nascent transcript by cleavage factors such as GreA or GreB allows the resumption of elongation from the new 3'terminus. GreA releases sequences of 2 to 3 nucleotides. In Methylococcus capsulatus (strain ATCC 33009 / NCIMB 11132 / Bath), this protein is Transcription elongation factor GreA.